Consider the following 201-residue polypeptide: Natural cytotoxicity triggering receptor 3 (201 aa).

Residues 1 to 18 form the signal peptide; sequence MAWMLLLILIMVHPGSCA. The Ig-like domain maps to 19–126; that stretch reads LWVSQPPEIR…VGTGNGTRLV (108 aa). At 19–135 the chain is on the extracellular side; it reads LWVSQPPEIR…VVEKEHPQLG (117 aa). A disulfide bridge links C39 with C108. N42 and N121 each carry an N-linked (GlcNAc...) asparagine glycan. The helical transmembrane segment at 136–156 threads the bilayer; that stretch reads AGTVLLLRAGFYAVSFLSVAV. The Cytoplasmic portion of the chain corresponds to 157 to 201; it reads GSTVYYQGKCLTWKGPRRQLPAVVPAPLPPPCGSSAQLLPPVPGG.

It belongs to the natural cytotoxicity receptor (NCR) family. In terms of assembly, homodimer in the unliganted form. Interacts with CD3Z. Interacts with and is activated by binding to NCR3LG1. Interacts with and is activated by binding to BAG6. Interacts with and is inhibited by binding to LGALS3.

It localises to the cell membrane. Cell membrane receptor of natural killer/NK cells that is activated by binding of extracellular ligands including BAG6 and NCR3LG1. Stimulates NK cells cytotoxicity toward neighboring cells producing these ligands. It controls, for instance, NK cells cytotoxicity against tumor cells. Engagement of NCR3 by BAG6 also promotes myeloid dendritic cells (DC) maturation, both through killing DCs that did not acquire a mature phenotype, and inducing the release by NK cells of TNFA and IFNG that promote DC maturation. This is Natural cytotoxicity triggering receptor 3 (NCR3) from Pan troglodytes (Chimpanzee).